A 297-amino-acid chain; its full sequence is 2,3,4,5-tetrahydropyridine-2,6-dicarboxylate N-succinyltransferase (297 aa).

Asp-148 and Glu-165 together coordinate Mg(2+). The active-site Acyl-anhydride intermediate is Glu-181. Succinyl-CoA contacts are provided by residues Arg-183, Gly-198, Ser-201, Ala-224, 239-240 (EA), Gly-247, Lys-258, and 271-274 (RRDS).

The protein belongs to the type 2 tetrahydrodipicolinate N-succinyltransferase family. As to quaternary structure, homotrimer.

It localises to the cytoplasm. It catalyses the reaction (S)-2,3,4,5-tetrahydrodipicolinate + succinyl-CoA + H2O = (S)-2-succinylamino-6-oxoheptanedioate + CoA. It functions in the pathway amino-acid biosynthesis; L-lysine biosynthesis via DAP pathway; LL-2,6-diaminopimelate from (S)-tetrahydrodipicolinate (succinylase route): step 1/3. In terms of biological role, catalyzes the conversion of the cyclic tetrahydrodipicolinate (THDP) into the acyclic N-succinyl-L-2-amino-6-oxopimelate using succinyl-CoA. In Corynebacterium glutamicum (strain ATCC 13032 / DSM 20300 / JCM 1318 / BCRC 11384 / CCUG 27702 / LMG 3730 / NBRC 12168 / NCIMB 10025 / NRRL B-2784 / 534), this protein is 2,3,4,5-tetrahydropyridine-2,6-dicarboxylate N-succinyltransferase.